Consider the following 240-residue polypeptide: Ribonuclease PH (240 aa).

Phosphate is bound by residues R86 and 124-126; that span reads GTR.

Belongs to the RNase PH family. As to quaternary structure, homohexameric ring arranged as a trimer of dimers.

The catalysed reaction is tRNA(n+1) + phosphate = tRNA(n) + a ribonucleoside 5'-diphosphate. Its function is as follows. Phosphorolytic 3'-5' exoribonuclease that plays an important role in tRNA 3'-end maturation. Removes nucleotide residues following the 3'-CCA terminus of tRNAs; can also add nucleotides to the ends of RNA molecules by using nucleoside diphosphates as substrates, but this may not be physiologically important. Probably plays a role in initiation of 16S rRNA degradation (leading to ribosome degradation) during starvation. In Rickettsia prowazekii (strain Madrid E), this protein is Ribonuclease PH.